The sequence spans 231 residues: ADP-ribosylation factor-like protein 6-interacting protein 4 (231 aa).

Residues 1 to 19 (MAHVSSRKRSRSRSRSRGR) show a composition bias toward basic residues. The segment at 1–154 (MAHVSSRKRS…EDNDGPVLTD (154 aa)) is disordered. Basic and acidic residues predominate over residues 20-34 (RGSEKRSKRSSKDSS). Positions 64–89 (TSRSSSSSSSSSSSSSSSSTSSSSSS) are enriched in low complexity. Basic residues predominate over residues 92–119 (RKKRGKHKDKKKRKKKKKRKKKMKRKGK). Serine 142 and serine 176 each carry phosphoserine. Residue lysine 193 forms a Glycyl lysine isopeptide (Lys-Gly) (interchain with G-Cter in SUMO2) linkage.

Belongs to the ARL6IP4 family. As to quaternary structure, interacts with ARL6. Interacts with ZCCHC17. Interacts with SRSF2.

Its subcellular location is the nucleus. It localises to the nucleolus. The protein resides in the nucleus speckle. Involved in modulating alternative pre-mRNA splicing with either 5' distal site activation or preferential use of 3' proximal site. This chain is ADP-ribosylation factor-like protein 6-interacting protein 4 (Arl6ip4), found in Rattus norvegicus (Rat).